Reading from the N-terminus, the 118-residue chain is uncharacterized protein (118 aa).

This is an uncharacterized protein from Clostridium perfringens.